The chain runs to 325 residues: E3 ubiquitin-protein ligase SIAH2 (325 aa).

Residues 1–15 (MSRPSSTGPSANKPC) are compositionally biased toward polar residues. Residues 1-43 (MSRPSSTGPSANKPCSKQPPPPQTPHAPSPAAPPAAATISAAG) form a disordered region. A Phosphoserine modification is found at Ser-6. Ser-16 bears the Phosphoserine; by DYRK2 mark. Over residues 17–33 (KQPPPPQTPHAPSPAAP) the composition is skewed to pro residues. Position 24 is a phosphothreonine; by MAPK14 (Thr-24). Position 29 is a phosphoserine; by DYRK2 and MAPK14 (Ser-29). The span at 34–43 (PAAATISAAG) shows a compositional bias: low complexity. The residue at position 69 (Ser-69) is a Phosphoserine; by DYRK2. An RING-type zinc finger spans residues 81–116 (CPVCFDYVLPPILQCQAGHLVCNQCRQKLSCCPTCR). The residue at position 120 (Thr-120) is a Phosphothreonine; by DYRK2. The tract at residues 131-323 (VASAVLFPCK…LGINVTISTC (193 aa)) is SBD. An SIAH-type zinc finger spans residues 134–194 (AVLFPCKYAT…VMSHLMHAHK (61 aa)). 8 residues coordinate Zn(2+): Cys-139, Cys-146, His-158, Cys-162, Cys-169, Cys-176, His-188, and His-193.

Belongs to the SINA (Seven in absentia) family. In terms of assembly, homodimer. Interacts with UBE2E2. Interacts with VAV1, without mediating its ubiquitin-mediated degradation. Interacts with CACYBP/SIP. Probable component of some large E3 complex possibly composed of UBE2D1, SIAH2, CACYBP/SIP, SKP1, APC and TBL1X. Interacts with UBE2I. Interacts with PEG10, which may inhibit its activity. Interacts with EGLN2 and SNCAIP. Interacts with DYRK2. Interacts with PEG3. Interacts with NR1D1 and NR1D2. Interacts with DCC. Interacts with AXIN1. In terms of processing, phosphorylated at Ser-29 by DYRK2; this increases the ubiquitin ligase activity and promotes degradation of EGLN3. Phosphorylated at Thr-24 and Ser-29 by MAPK14, which mediates the degradation by the proteasome of EGLN3. Widely expressed at low level in embryos and adults. Expressed in a specific population of germ cells within both the mouse ovary and testis. Absent in primordial oocytes but expressed in all growing oocytes, coincident with their recruitment from the pool of quiescent cells. Its level of expression increases as the oocytes mature. Expressed in Graafian follicles and in fertilized zygotes up until the two cell stage, a time of extensive maternal transcript degradation and zygotic gene activation. Expressed in the testis from postmeiotic spermatids.

The protein resides in the cytoplasm. It localises to the nucleus. The enzyme catalyses S-ubiquitinyl-[E2 ubiquitin-conjugating enzyme]-L-cysteine + [acceptor protein]-L-lysine = [E2 ubiquitin-conjugating enzyme]-L-cysteine + N(6)-ubiquitinyl-[acceptor protein]-L-lysine.. It participates in protein modification; protein ubiquitination. Its function is as follows. E3 ubiquitin-protein ligase that mediates ubiquitination and subsequent proteasomal degradation of target proteins. E3 ubiquitin ligases accept ubiquitin from an E2 ubiquitin-conjugating enzyme in the form of a thioester and then directly transfers the ubiquitin to targeted substrates. Mediates E3 ubiquitin ligase activity either through direct binding to substrates or by functioning as the essential RING domain subunit of larger E3 complexes. Mediates ubiquitination and proteasomal degradation of DYRK2 in response to hypoxia. Promotes monoubiquitination of SNCA. Triggers the ubiquitin-mediated degradation of many substrates, including proteins involved in transcription regulation (GPS2, POU2AF1, PML, NCOR1), a cell surface receptor (DCC), an antiapoptotic protein (BAG1), and a protein involved in synaptic vesicle function in neurons (SYP). It is thereby involved in apoptosis, tumor suppression, cell cycle, transcription and signaling processes. Has some overlapping function with SIAH1. Triggers the ubiquitin-mediated degradation of TRAF2, whereas SIAH1 does not. Regulates cellular clock function via ubiquitination of the circadian transcriptional repressors NR1D1 and NR1D2 leading to their proteasomal degradation. Plays an important role in mediating the rhythmic degradation/clearance of NR1D1 and NR1D2 contributing to their circadian profile of protein abundance. Mediates ubiquitination and degradation of EGLN2 and EGLN3 in response to the unfolded protein response (UPR), leading to their degradation and subsequent stabilization of ATF4. Also part of the Wnt signaling pathway in which it mediates the Wnt-induced ubiquitin-mediated proteasomal degradation of AXIN1. The chain is E3 ubiquitin-protein ligase SIAH2 (Siah2) from Mus musculus (Mouse).